Here is a 198-residue protein sequence, read N- to C-terminus: Na(+)-translocating NADH-quinone reductase subunit E (198 aa).

6 consecutive transmembrane segments (helical) span residues serine 11–valine 31, valine 35–valine 55, phenylalanine 77–phenylalanine 97, glycine 110–valine 130, valine 140–leucine 160, and leucine 176–isoleucine 196.

This sequence belongs to the NqrDE/RnfAE family. In terms of assembly, composed of six subunits; NqrA, NqrB, NqrC, NqrD, NqrE and NqrF.

The protein localises to the cell inner membrane. The enzyme catalyses a ubiquinone + n Na(+)(in) + NADH + H(+) = a ubiquinol + n Na(+)(out) + NAD(+). Its function is as follows. NQR complex catalyzes the reduction of ubiquinone-1 to ubiquinol by two successive reactions, coupled with the transport of Na(+) ions from the cytoplasm to the periplasm. NqrA to NqrE are probably involved in the second step, the conversion of ubisemiquinone to ubiquinol. The chain is Na(+)-translocating NADH-quinone reductase subunit E from Mannheimia succiniciproducens (strain KCTC 0769BP / MBEL55E).